The sequence spans 656 residues: Solute carrier family 5 member 4A (656 aa).

Residues 1–28 (MASTASVSTSTASSELSSLSNNINNAAD) are Cytoplasmic-facing. Residues 29–47 (ISVIVIYFVVVMAVGVWAM) form a helical membrane-spanning segment. At 48-64 (LKTNRSTVGGFFLAGRS) the chain is on the extracellular side. Residues 65–85 (MTWWPMGASLFASNIGSGHFV) form a helical membrane-spanning segment. Residues 86–105 (GLAGTGAASGIAVTAFESHS) lie on the Cytoplasmic side of the membrane. The chain crosses the membrane as a helical span at residues 106-126 (FALLLVLGWIFVPIYIKAGVM). Residues 127 to 171 (TMPEYLKKRFGGKRLQIYLSILFLFICVILTISADIFSGAIFIKL) are Extracellular-facing. The helical transmembrane segment at 172 to 191 (ALGLNLYLAILILLAITAIF) threads the bilayer. The Cytoplasmic segment spans residues 192 to 208 (TITGGLASVIYTDTVQA). Residues 209-229 (VIMLVGSFILMVFAFVEVGGY) traverse the membrane as a helical segment. Residues 230-270 (ESFTEKFMNAIPSVVEGDNLTINSRCYTPQPDSFHIFRDPV) are Extracellular-facing. Residue Asn248 is glycosylated (N-linked (GlcNAc...) asparagine). Residues 271–291 (TGDIPWPGTAFGMPITALWYW) traverse the membrane as a helical segment. Over 292–314 (CINQVIVQRCLCGKNLSHVKAAC) the chain is Cytoplasmic. A helical membrane pass occupies residues 315-334 (ILCGYLKLLPLFFMVMPGMI). At 335–423 (SRILYTDMVA…RKKASERELL (89 aa)) the chain is on the extracellular side. A helical transmembrane segment spans residues 424–443 (IAGRLFVSVLIVTSILWVPI). Residues 444–455 (VEVSQGGQLVHY) lie on the Cytoplasmic side of the membrane. The helical transmembrane segment at 456–476 (TEAISSYLGPPIAAVFLVAVF) threads the bilayer. Residues 477-526 (CKRANEQGAFWGLMVGLVMGLIRMIAEFSYGTGSCLAPSSCPKIICGVHY) are Extracellular-facing. The helical transmembrane segment at 527 to 547 (LYFAIILFFVCILVILGVSYL) threads the bilayer. Residues 548-634 (TKPIPDVHLH…TDTTEKPFWR (87 aa)) are Cytoplasmic-facing. Residues 574–593 (DAEDKEENGADDRTEEDQTE) form a disordered region. The chain crosses the membrane as a helical span at residues 635 to 655 (TVMNVNVILLLAVAAFFYGYF).

Belongs to the sodium:solute symporter (SSF) (TC 2.A.21) family. In terms of tissue distribution, expressed in small intestine. Expressed in kidney.

Its subcellular location is the cell membrane. With respect to regulation, not inhibited by phlorizin. Its function is as follows. Does not function as sodium/D-glucose symporter. Generates D-glucose-induced depolarization in a pH-dependent manner, with activity in acidic conditions (pH 5) but not neutral conditions. The chain is Solute carrier family 5 member 4A from Mus musculus (Mouse).